We begin with the raw amino-acid sequence, 417 residues long: Cytoplasmic tRNA 2-thiolation protein 2 (417 aa).

Residues 1 to 11 show a composition bias toward acidic residues; the sequence is MCSIVEDDFGD. The disordered stretch occupies residues 1–24; the sequence is MCSIVEDDFGDEGGAHAMKEDTPQ. Residues 13-22 are compositionally biased toward basic and acidic residues; it reads GGAHAMKEDT.

This sequence belongs to the CTU2/NCS2 family.

It localises to the cytoplasm. It participates in tRNA modification; 5-methoxycarbonylmethyl-2-thiouridine-tRNA biosynthesis. Plays a central role in 2-thiolation of mcm(5)S(2)U at tRNA wobble positions of tRNA(Lys), tRNA(Glu) and tRNA(Gln). May act by forming a heterodimer with NCS6/CTU1 that ligates sulfur from thiocarboxylated URM1 onto the uridine of tRNAs at wobble position. In Anopheles gambiae (African malaria mosquito), this protein is Cytoplasmic tRNA 2-thiolation protein 2.